Consider the following 428-residue polypeptide: UPF0761 membrane protein TERTU_3006 (428 aa).

Helical transmembrane passes span Leu-47–Phe-67, Leu-104–Glu-124, Tyr-143–Leu-163, Val-189–Cys-209, Ile-218–Val-238, Gly-248–Leu-268, and Met-292–Val-312.

This sequence belongs to the UPF0761 family.

The protein localises to the cell inner membrane. The chain is UPF0761 membrane protein TERTU_3006 from Teredinibacter turnerae (strain ATCC 39867 / T7901).